The primary structure comprises 423 residues: Serine--tRNA ligase (423 aa).

231 to 233 (TGE) lines the L-serine pocket. 262–264 (RSE) provides a ligand contact to ATP. Glu-285 lines the L-serine pocket. 349-352 (EISS) contacts ATP. Position 385 (Ser-385) interacts with L-serine.

This sequence belongs to the class-II aminoacyl-tRNA synthetase family. Type-1 seryl-tRNA synthetase subfamily. In terms of assembly, homodimer. The tRNA molecule binds across the dimer.

The protein resides in the cytoplasm. The catalysed reaction is tRNA(Ser) + L-serine + ATP = L-seryl-tRNA(Ser) + AMP + diphosphate + H(+). The enzyme catalyses tRNA(Sec) + L-serine + ATP = L-seryl-tRNA(Sec) + AMP + diphosphate + H(+). The protein operates within aminoacyl-tRNA biosynthesis; selenocysteinyl-tRNA(Sec) biosynthesis; L-seryl-tRNA(Sec) from L-serine and tRNA(Sec): step 1/1. Its function is as follows. Catalyzes the attachment of serine to tRNA(Ser). Is also able to aminoacylate tRNA(Sec) with serine, to form the misacylated tRNA L-seryl-tRNA(Sec), which will be further converted into selenocysteinyl-tRNA(Sec). The sequence is that of Serine--tRNA ligase from Coxiella burnetii (strain CbuK_Q154) (Coxiella burnetii (strain Q154)).